The primary structure comprises 33 residues: Photosystem II reaction center protein Psb30 (33 aa).

The chain crosses the membrane as a helical span at residues 5–25; it reads IVFQLTALLFVVAAGPLVIVL.

This sequence belongs to the Psb30/Ycf12 family. As to quaternary structure, PSII is composed of 1 copy each of membrane proteins PsbA, PsbB, PsbC, PsbD, PsbE, PsbF, PsbH, PsbI, PsbJ, PsbK, PsbL, PsbM, PsbT, PsbX, PsbY, PsbZ, Psb30/Ycf12, peripheral proteins of the oxygen-evolving complex and a large number of cofactors. It forms dimeric complexes.

The protein localises to the plastid. It is found in the chloroplast thylakoid membrane. A core subunit of photosystem II (PSII), probably helps stabilize the reaction center. This chain is Photosystem II reaction center protein Psb30, found in Chlorella vulgaris (Green alga).